The following is a 710-amino-acid chain: Lactoperoxidase (710 aa).

The first 23 residues, 1–23 (MKVLLHLPALLASLTLLQTAASA), serve as a signal peptide directing secretion. A propeptide spanning residues 24 to 80 (SDDPTAETDIIHDTVEEVKVWVNKAFLDSRDRLKMAMTTKIHSTRHLSDYLKHAKGR) is cleaved from the precursor. Cysteines 130 and 143 form a disulfide. Asp-223 is a heme b binding site. His-224 acts as the Proton acceptor in catalysis. Residue Asp-225 coordinates Ca(2+). Intrachain disulfides connect Cys-244/Cys-254 and Cys-248/Cys-272. Ca(2+) is bound by residues Thr-299, Phe-301, Asp-303, and Ser-305. Residue Ser-313 is modified to Phosphoserine. Cys-352 and Cys-363 are oxidised to a cystine. Positions 373 and 466 each coordinate heme b. Residue Tyr-480 is modified to 3'-nitrotyrosine. 2 disulfides stabilise this stretch: Cys-571-Cys-628 and Cys-669-Cys-694.

It belongs to the peroxidase family. Ca(2+) is required as a cofactor. The cofactor is heme b. Expressed in the colon, including colonocytes and mucin-containing goblet cells. Not detected in the ileum.

Its subcellular location is the secreted. The protein resides in the cytoplasm. The catalysed reaction is 2 a phenolic donor + H2O2 = 2 a phenolic radical donor + 2 H2O. The enzyme catalyses thiocyanate + H2O2 + H(+) = hypothiocyanous acid + H2O. It catalyses the reaction iodide + H2O2 = hypoiodite + H2O. In terms of biological role, heme-containing oxidoreductase which catalyzes the conversion of thiocyanate (SCN(-)) into antimicrobial agent hypothiocyanous acid (OSCN(-)) in the presence of hydrogen peroxide (H2O2). Also involved in the conversion of iodide (I(-)) into hypoiodite (IO(-)) in the presence of H2O2. Responsible for the inactivation of a wide range of micro-organisms and hence, important component of defense mechanism. May be implicated in airway host defense against infection. May contribute to maintaining an appropriate H2O2 cellular level, therefore protecting cells from H2O2-caused injuries and inflammation. In Mus musculus (Mouse), this protein is Lactoperoxidase.